Consider the following 293-residue polypeptide: Protease HtpX (293 aa).

The next 2 helical transmembrane spans lie at 4–24 (IALF…VLSL) and 34–54 (GLLI…LLMS). Zn(2+) is bound at residue histidine 139. Glutamate 140 is an active-site residue. Histidine 143 contacts Zn(2+). Transmembrane regions (helical) follow at residues 158–178 (VVNT…AGFL) and 193–213 (LIYF…ASII). A Zn(2+)-binding site is contributed by glutamate 222.

This sequence belongs to the peptidase M48B family. Requires Zn(2+) as cofactor.

Its subcellular location is the cell inner membrane. The protein is Protease HtpX of Salmonella agona (strain SL483).